A 545-amino-acid chain; its full sequence is Probable sucrose-6-phosphate hydrolase (545 aa).

Substrate contacts are provided by residues 107–110, Q126, 169–170, 230–231, and E285; these read LLND, FS, and RD. D110 is a catalytic residue.

The protein belongs to the glycosyl hydrolase 32 family.

The protein localises to the cytoplasm. It carries out the reaction Hydrolysis of terminal non-reducing beta-D-fructofuranoside residues in beta-D-fructofuranosides.. It participates in glycan biosynthesis; sucrose metabolism. Functionally, enables the bacterium to metabolize sucrose as a sole carbon source. This chain is Probable sucrose-6-phosphate hydrolase, found in Psychromonas ingrahamii (strain DSM 17664 / CCUG 51855 / 37).